The following is a 63-amino-acid chain: UPF0434 protein BAV2101 (63 aa).

Belongs to the UPF0434 family.

The chain is UPF0434 protein BAV2101 from Bordetella avium (strain 197N).